The primary structure comprises 216 residues: Putative ripening-related protein 4 (216 aa).

Positions 1-25 (MAANVKVLVVLALLQLMSLHAVVHG) are cleaved as a signal peptide.

Belongs to the kiwellin family.

The protein localises to the secreted. The polypeptide is Putative ripening-related protein 4 (Oryza sativa subsp. japonica (Rice)).